We begin with the raw amino-acid sequence, 629 residues long: tRNA uridine 5-carboxymethylaminomethyl modification enzyme MnmG (629 aa).

FAD-binding positions include 15-20, valine 127, and serine 182; that span reads GAGHAG. The segment at 203-226 is disordered; the sequence is TPPRVKSSTIDYSKTEEQPGDDHP. Basic and acidic residues predominate over residues 215-226; sequence SKTEEQPGDDHP. An NAD(+)-binding site is contributed by 274-288; sequence GARYCPSIEDKIVRF. Glutamine 371 is an FAD binding site.

This sequence belongs to the MnmG family. Homodimer. Heterotetramer of two MnmE and two MnmG subunits. It depends on FAD as a cofactor.

It is found in the cytoplasm. Functionally, NAD-binding protein involved in the addition of a carboxymethylaminomethyl (cmnm) group at the wobble position (U34) of certain tRNAs, forming tRNA-cmnm(5)s(2)U34. This chain is tRNA uridine 5-carboxymethylaminomethyl modification enzyme MnmG, found in Listeria innocua serovar 6a (strain ATCC BAA-680 / CLIP 11262).